We begin with the raw amino-acid sequence, 375 residues long: Chaperone protein DnaJ (375 aa).

Positions 5–69 (DYYEILGIDK…QKRAQYDQFG (65 aa)) constitute a J domain. The segment at 131–213 (GKETDIEIPK…CGGSGTVQKN (83 aa)) adopts a CR-type zinc-finger fold. Cysteine 144, cysteine 147, cysteine 161, cysteine 164, cysteine 187, cysteine 190, cysteine 201, and cysteine 204 together coordinate Zn(2+). 4 CXXCXGXG motif repeats span residues 144–151 (CDTCNGSG), 161–168 (CSHCHGSG), 187–194 (CNYCQGTG), and 201–208 (CNTCGGSG).

Belongs to the DnaJ family. As to quaternary structure, homodimer. Zn(2+) is required as a cofactor.

Its subcellular location is the cytoplasm. In terms of biological role, participates actively in the response to hyperosmotic and heat shock by preventing the aggregation of stress-denatured proteins and by disaggregating proteins, also in an autonomous, DnaK-independent fashion. Unfolded proteins bind initially to DnaJ; upon interaction with the DnaJ-bound protein, DnaK hydrolyzes its bound ATP, resulting in the formation of a stable complex. GrpE releases ADP from DnaK; ATP binding to DnaK triggers the release of the substrate protein, thus completing the reaction cycle. Several rounds of ATP-dependent interactions between DnaJ, DnaK and GrpE are required for fully efficient folding. Also involved, together with DnaK and GrpE, in the DNA replication of plasmids through activation of initiation proteins. In Oceanobacillus iheyensis (strain DSM 14371 / CIP 107618 / JCM 11309 / KCTC 3954 / HTE831), this protein is Chaperone protein DnaJ.